Reading from the N-terminus, the 221-residue chain is MGRRPARCYRQIKGKPYPKSRYCRGVPDPKIRIYDVGMKRKGVDEFPFCVHLVSWEKENVSSEALEAARIACNKYMVKSAGKDAFHLRIRVHPFHVLRINKMLSCAGADRLQTGMRGAFGKALGTCARVAIGQVLLSVRCKDNHGVHAQEALRRAKFKFPGRQKIIVSRKWGFTKFNRAEYTKLRAMKRIVPDGVNAKFLSNHGPLANRQPGSAFISATSE.

The protein belongs to the universal ribosomal protein uL16 family. As to quaternary structure, component of the small ribosomal subunit. Mature ribosomes consist of a small (40S) and a large (60S) subunit. The 40S subunit contains about 33 different proteins and 1 molecule of RNA (18S). The 60S subunit contains about 49 different proteins and 3 molecules of RNA (25S, 5.8S and 5S).

The chain is Large ribosomal subunit protein uL16x (RPL10C) from Arabidopsis thaliana (Mouse-ear cress).